A 66-amino-acid polypeptide reads, in one-letter code: MKIFFFIFAALFLLAQIFQARTAIHRALICKRMEGHCEAECLTFEAKIGGCRAELAPFCCKNRKKH.

An N-terminal signal peptide occupies residues 1-22 (MKIFFFIFAALFLLAQIFQART). Cystine bridges form between cysteine 37-cysteine 51 and cysteine 41-cysteine 60.

Belongs to the beta-defensin family.

The protein localises to the secreted. In terms of biological role, has antibacterial activity. This chain is Beta-defensin 107A (DEFB107A), found in Gorilla gorilla gorilla (Western lowland gorilla).